The chain runs to 436 residues: Trigger factor (436 aa).

The region spanning 163 to 248 (GDTVVIDFDG…IHEVKEKQLP (86 aa)) is the PPIase FKBP-type domain.

Belongs to the FKBP-type PPIase family. Tig subfamily.

Its subcellular location is the cytoplasm. It carries out the reaction [protein]-peptidylproline (omega=180) = [protein]-peptidylproline (omega=0). Its function is as follows. Involved in protein export. Acts as a chaperone by maintaining the newly synthesized protein in an open conformation. Functions as a peptidyl-prolyl cis-trans isomerase. In Levilactobacillus brevis (strain ATCC 367 / BCRC 12310 / CIP 105137 / JCM 1170 / LMG 11437 / NCIMB 947 / NCTC 947) (Lactobacillus brevis), this protein is Trigger factor.